Consider the following 546-residue polypeptide: Chaperonin GroEL (546 aa).

ATP is bound by residues 30–33, lysine 51, 87–91, glycine 415, 479–481, and aspartate 495; these read TLGP, DGTTT, and NAA.

This sequence belongs to the chaperonin (HSP60) family. Forms a cylinder of 14 subunits composed of two heptameric rings stacked back-to-back. Interacts with the co-chaperonin GroES.

It localises to the cytoplasm. The catalysed reaction is ATP + H2O + a folded polypeptide = ADP + phosphate + an unfolded polypeptide.. Functionally, together with its co-chaperonin GroES, plays an essential role in assisting protein folding. The GroEL-GroES system forms a nano-cage that allows encapsulation of the non-native substrate proteins and provides a physical environment optimized to promote and accelerate protein folding. In Pseudomonas putida (strain ATCC 700007 / DSM 6899 / JCM 31910 / BCRC 17059 / LMG 24140 / F1), this protein is Chaperonin GroEL.